The chain runs to 93 residues: MNAKVVVVLVLVLTALCLSDGKPVSLSYRCPCRFFESHVARANVKHLKILNTPNCALQIVARLKNNNRQVCIDPKLKWIQEYLEKALNKRFKM.

Residues 1 to 21 (MNAKVVVVLVLVLTALCLSDG) form the signal peptide. Residues 22 to 23 (KP) carry the Receptor activation motif motif. Positions 29-33 (RCPCR) are receptor and heparin binding. 2 disulfide bridges follow: Cys30–Cys55 and Cys32–Cys71. Receptor binding stretches follow at residues 39 to 41 (VAR), 48 to 50 (KIL), and 60 to 70 (VARLKNNNRQV). Heparin contacts are provided by residues 41-51 (RANVKHLKILN), Arg62, Gln69, and Lys85.

Belongs to the intercrine alpha (chemokine CxC) family. Monomer or homodimer; in equilibrium. Dimer formation is induced by non acidic pH and the presence of multivalent anions, and by binding to CXCR4 or heparin. Monomeric form is required for full chemotactic activity and resistance to ischemia/reperfusion injury, whereas the dimeric form acts as a partial agonist of CXCR4, stimulating Ca2+ mobilization but with no chemotactic activity and instead acts as a selective antagonist that blocks chemotaxis induced by the monomeric form. Interacts with the N-terminus of ACKR3. Interacts with integrin subunit ITGB3 (via the allosteric site (site 2)). Interacts with TNFAIP6 (via Link domain). As to quaternary structure, (Microbial infection) Interacts with molluscum contagiosum virus protein MC148. Processed forms SDF-1-beta(3-72) and SDF-1-alpha(3-67) are produced after secretion by proteolytic cleavage of isoforms Beta and Alpha, respectively. The N-terminal processing is probably achieved by DPP4. Isoform Alpha is first cleaved at the C-terminus to yield a SDF-1-alpha(1-67) intermediate before being processed at the N-terminus. The C-terminal processing of isoform Alpha is reduced by binding to heparin and, probably, cell surface proteoglycans. Isoform Alpha and isoform Beta are ubiquitously expressed, with highest levels detected in liver, pancreas and spleen. Isoform Gamma is mainly expressed in heart, with weak expression detected in several other tissues. Isoform Delta, isoform Epsilon and isoform Theta have highest expression levels in pancreas, with lower levels detected in heart, kidney, liver and spleen.

The protein resides in the secreted. In terms of biological role, chemoattractant active on T-lymphocytes and monocytes but not neutrophils. Activates the C-X-C chemokine receptor CXCR4 to induce a rapid and transient rise in the level of intracellular calcium ions and chemotaxis. SDF-1-beta(3-72) and SDF-1-alpha(3-67) show a reduced chemotactic activity. Binding to cell surface proteoglycans seems to inhibit formation of SDF-1-alpha(3-67) and thus to preserve activity on local sites. Also binds to atypical chemokine receptor ACKR3, which activates the beta-arrestin pathway and acts as a scavenger receptor for SDF-1. Binds to the allosteric site (site 2) of integrins and activates integrins ITGAV:ITGB3, ITGA4:ITGB1 and ITGA5:ITGB1 in a CXCR4-independent manner. Acts as a positive regulator of monocyte migration and a negative regulator of monocyte adhesion via the LYN kinase. Stimulates migration of monocytes and T-lymphocytes through its receptors, CXCR4 and ACKR3, and decreases monocyte adherence to surfaces coated with ICAM-1, a ligand for beta-2 integrins. SDF1A/CXCR4 signaling axis inhibits beta-2 integrin LFA-1 mediated adhesion of monocytes to ICAM-1 through LYN kinase. Inhibits CXCR4-mediated infection by T-cell line-adapted HIV-1. Plays a protective role after myocardial infarction. Induces down-regulation and internalization of ACKR3 expressed in various cells. Has several critical functions during embryonic development; required for B-cell lymphopoiesis, myelopoiesis in bone marrow and heart ventricular septum formation. Stimulates the proliferation of bone marrow-derived B-cell progenitors in the presence of IL7 as well as growth of stromal cell-dependent pre-B-cells. This is Stromal cell-derived factor 1 (CXCL12) from Homo sapiens (Human).